The following is a 320-amino-acid chain: Short-chain dehydrogenase/reductase ARMGADRAFT_1169971 (320 aa).

Residues 19–39 (KVAVVTGANSGIGLYILFHVA) form a helical membrane-spanning segment. NADP(+)-binding residues include isoleucine 30, aspartate 78, asparagine 105, and lysine 136. An N-linked (GlcNAc...) asparagine glycan is attached at asparagine 157. Serine 159 functions as the Proton donor in the catalytic mechanism. Tyrosine 192, lysine 196, valine 227, and serine 229 together coordinate NADP(+). Catalysis depends on tyrosine 192, which acts as the Proton acceptor. Lysine 196 (lowers pKa of active site Tyr) is an active-site residue. Residues 235 to 255 (LFTSLMFGTIINWVFSLFFIS) form a helical membrane-spanning segment.

The protein belongs to the short-chain dehydrogenases/reductases (SDR) family.

It localises to the membrane. The protein operates within secondary metabolite biosynthesis. Short-chain dehydrogenase/reductase, part of the gene cluster that mediates the biosynthesis of melleolides, a range of antifungal and phytotoxic polyketide derivatives composed of an orsellinic acid (OA) moiety esterified to various sesquiterpene alcohols. The first step in melleolides biosynthesis is performed by the delta(6)-protoilludene synthase PRO1 which catalyzes the cyclization of farnesyl diphosphate to protoilludene. The orsellinic acid synthase armB produces OA by condensing acetyl-CoA with 3 malonyl-CoA units in a three-round chain elongation reaction folowed by a C2-C7 ring closure. ArmB further catalyzes the trans-esterification of OA to the various sesquiterpene alcohols resulting from the hydroxylation of protoilludene. The melleolides cluster also includes 5 cytochrome P450 monooxygenases, 4 NAD(+)-dependent oxidoreductases, one flavin-dependent oxidoreductase, and one O-methyltransferase. The cytochrome P450 monooxygenases may be involved in protoilludene hydroxylation to elaborate melleolides with multiple alcohol groups, such as melleolide D, which carries alcohol functionalities at C-4, C-5, C-10, and C-13. The role of the NAD(+)-dependent enzymes remains unknown. Numerous melleolides, including arnamial, show 5'-O-methylation of the aromatic moiety which may be catalyzed by the methyltransferase encoded in the cluster. The flavin-dependent oxidoreductase might represent the dehydrogenase yielding the aldehyde in position 1 of arnamial and other melleolides. Finally, several halogenase localized outside of the cluster, are able to catalyze the transfer of a single chlorine atom to the melleolide backbone, resulting in a 6'-chloromelleolide product. This is Short-chain dehydrogenase/reductase ARMGADRAFT_1169971 from Armillaria gallica (Bulbous honey fungus).